Reading from the N-terminus, the 77-residue chain is Conotoxin Lt7.1 (77 aa).

The signal sequence occupies residues 1–19 (MEKLTILLLVAALLMSTQG). Residues 20-49 (LIQSGGENRPKEKIKFLSKRKTVAESWWEG) constitute a propeptide that is removed on maturation. 3 cysteine pairs are disulfide-bonded: Cys-51–Cys-65, Cys-58–Cys-69, and Cys-64–Cys-74.

This sequence belongs to the conotoxin O2 superfamily. In terms of tissue distribution, expressed by the venom duct.

It localises to the secreted. The chain is Conotoxin Lt7.1 from Conus litteratus (Lettered cone).